The following is a 954-amino-acid chain: MDGQIDKMEKRYSMTKLENRLRTFQDGVALEKKKLKWSFKVIPYQAMAKLGFYFDPVIDPKTSKLKKDSVRCCYCHRQTYNVRDCRSKRKDVLETLSNIMRQHLTVTDNKQVCLLIYLRNKLLTDYSFHMGVSDWKNDKYFSNPDDENVINLRKFTFQDNWPHSGSQNEHPLGIEKMVNAGLMRYDSSIEGLGDPSMDKTLMNDTCYCIYCKQLLQGWSINDDPMSRHYKVSQNGNCYFFQTRNRFERIKNDNDSITKNCEVSPTLGENGKREVINTKTASQRQCPLFESPPSSTGPQLDDYNEKTDISVIQHNISVLDGAQGENVKRNSVEEKEQINMENGSTTLEEGNINRDVLADKKEVISTPTAKEIKRPNVQLTQSSSPIKKKRKFKRISPRKIFDEEDSEHSLNNNSANGDNKDKDLVIDFTSHIIKNRDVGRKNAILDDSTDEFSFSNQGHNTFDIPIPTSSHLLKGIDSDNDNVIREDDTGINTDTKGASSKHEKFSVNSEEDLNFSEVKLTGRDSSTNILIRTQIVDQNLGDIDRDKVPNGGSPEVPKTHELIRDNSEKREAQNGEFRHQKDSTVRQSPDILHSNKSGDNSSNITAIPKEEQRRGNSKTSSIPADIHPKPRKNLQEPRSLSISGKVVPTERKLDNINIDLNFSASDFSPSSQSEQSSKSSSVISTPVASPKINLTRSLHAVKELSGLKKETDDGKYFTNKQETIKILEDVSVKNETPNNEMLLFETGTPIASQENKSRKLFDEEFSGKELDIPIDSSTVEIKKVIKPEFEPVPSVARNLVSGTSSYPRNSRLEEQRKETSTSLADNSKKGSSFNEGNNEKEPNAAEWFKIDENRHLVKNYFHDLLKYINNNDATLANDKDGDLAFLIKQMPAEELDMTFNNWVNLKVQSIKREFIDDCDKKLDILRRDYYTATNFIETLEDDNQLIDIAKKMGIL.

2 BIR repeats span residues arginine 20–tyrosine 117 and arginine 153–glutamine 241. Positions 208, 211, 228, and 237 each coordinate Zn(2+). The segment at asparagine 375–lysine 419 is disordered. The segment covering isoleucine 385–proline 396 has biased composition (basic residues). Serine 477, serine 508, and serine 552 each carry phosphoserine. 2 disordered regions span residues aspartate 541 to valine 645 and phenylalanine 661 to proline 685. Over residues proline 556–threonine 583 the composition is skewed to basic and acidic residues. Serine 587 is modified (phosphoserine). Positions serine 593–threonine 604 are enriched in polar residues. 2 positions are modified to phosphoserine: serine 751 and serine 765. Residues leucine 798 to lysine 839 form a disordered region. Residues serine 809–threonine 818 show a composition bias toward basic and acidic residues. Over residues serine 819 to glycine 835 the composition is skewed to polar residues.

As to quaternary structure, component of the CPC complex at least composed of IPL1, BIR1 and SLI15. Interacts with CBF2/NDC10. Interacts with CBF3D/SKP1.

Component of the chromosomal passenger complex (CPC), a complex that acts as a key regulator of chromosome segregation and cytokinesis. The protein is Chromosomal passenger complex protein BIR1 (BIR1) of Saccharomyces cerevisiae (strain ATCC 204508 / S288c) (Baker's yeast).